Reading from the N-terminus, the 149-residue chain is Globin (149 aa).

Residues 2–149 (VLTKDEFDSL…KIFTGVAGQL (148 aa)) form the Globin domain. Residue H100 participates in heme binding.

Belongs to the globin family. As to quaternary structure, monomer.

Oxygen binding protein. The sequence is that of Globin from Isoparorchis hypselobagri (Giant trematode).